The primary structure comprises 222 residues: MNNSVTNTARLLWAGLRSLLVLTVVTGVLYPLAVTGVAQGLFSDQANGSEIKADGKVVGSSLIGQAYNLPLKKGQETPEPDLKWFQGRPANGLGTNSVNTQYSLILSGATNRSGDNADLIKWVKDAKAAVVKDNSTADHKVKPSDVPADAVTSSGSGLDPDISPEYADLQVHRIAEQNHLAVAPVQKLVDEHTDGRTLGFIGEPRVNVLELNIALKELVATS.

Residues 13 to 35 (WAGLRSLLVLTVVTGVLYPLAVT) form a helical membrane-spanning segment. A disordered region spans residues 136-162 (TADHKVKPSDVPADAVTSSGSGLDPDI).

The protein belongs to the KdpC family. The system is composed of three essential subunits: KdpA, KdpB and KdpC.

Its subcellular location is the cell membrane. Functionally, part of the high-affinity ATP-driven potassium transport (or Kdp) system, which catalyzes the hydrolysis of ATP coupled with the electrogenic transport of potassium into the cytoplasm. This subunit acts as a catalytic chaperone that increases the ATP-binding affinity of the ATP-hydrolyzing subunit KdpB by the formation of a transient KdpB/KdpC/ATP ternary complex. The protein is Potassium-transporting ATPase KdpC subunit of Streptomyces avermitilis (strain ATCC 31267 / DSM 46492 / JCM 5070 / NBRC 14893 / NCIMB 12804 / NRRL 8165 / MA-4680).